The sequence spans 428 residues: Elongation factor 1-alpha (428 aa).

Residues 5-217 (KPHVNIVFIG…DQIPEPEKPI (213 aa)) form the tr-type G domain. Residues 14–21 (GHVDHGKS) are G1. 14–21 (GHVDHGKS) is a binding site for GTP. Ser21 is a binding site for Mg(2+). Residues 68 to 72 (GITID) are G2. The interval 89 to 92 (DAPG) is G3. GTP-binding positions include 89–93 (DAPGH) and 144–147 (NKMD). The tract at residues 144–147 (NKMD) is G4. Residues 181–183 (SAW) form a G5 region.

It belongs to the TRAFAC class translation factor GTPase superfamily. Classic translation factor GTPase family. EF-Tu/EF-1A subfamily.

The protein localises to the cytoplasm. The catalysed reaction is GTP + H2O = GDP + phosphate + H(+). GTP hydrolase that promotes the GTP-dependent binding of aminoacyl-tRNA to the A-site of ribosomes during protein biosynthesis. This chain is Elongation factor 1-alpha, found in Pyrococcus horikoshii (strain ATCC 700860 / DSM 12428 / JCM 9974 / NBRC 100139 / OT-3).